A 267-amino-acid chain; its full sequence is Hydroxynaphthalene reductase-like protein Arp2 (267 aa).

Positions 25, 45, 71, and 98 each coordinate NADP(+). Active-site proton donor residues include S147 and S148. The NADP(+) site is built by Y162, K166, V195, and T197. Y162 acts as the Proton acceptor in catalysis. The active-site Lowers pKa of active site Tyr is K166.

The protein belongs to the short-chain dehydrogenases/reductases (SDR) family.

In terms of biological role, hydroxynaphthalene reductase-like protein; part of the Pks2 gene cluster that mediates the formation of infectious structures (appressoria), enabling these fungi to kill insects faster. The product of the Pks2 gene cluster is different from the one of Pks1 and has still not been identified. The protein is Hydroxynaphthalene reductase-like protein Arp2 of Metarhizium majus (strain ARSEF 297).